A 210-amino-acid chain; its full sequence is Pyridoxine/pyridoxamine 5'-phosphate oxidase (210 aa).

Substrate is bound by residues 7-10 (RQSY) and lysine 65. FMN contacts are provided by residues 60–65 (RIVLIK), 75–76 (FT), arginine 81, lysine 82, and glutamine 104. Residues tyrosine 122, arginine 126, and serine 130 each contribute to the substrate site. Residues 139 to 140 (QS) and tryptophan 182 each bind FMN. 188–190 (RLH) contributes to the substrate binding site. Residue arginine 192 participates in FMN binding.

This sequence belongs to the pyridoxamine 5'-phosphate oxidase family. In terms of assembly, homodimer. It depends on FMN as a cofactor.

It carries out the reaction pyridoxamine 5'-phosphate + O2 + H2O = pyridoxal 5'-phosphate + H2O2 + NH4(+). The catalysed reaction is pyridoxine 5'-phosphate + O2 = pyridoxal 5'-phosphate + H2O2. It participates in cofactor metabolism; pyridoxal 5'-phosphate salvage; pyridoxal 5'-phosphate from pyridoxamine 5'-phosphate: step 1/1. The protein operates within cofactor metabolism; pyridoxal 5'-phosphate salvage; pyridoxal 5'-phosphate from pyridoxine 5'-phosphate: step 1/1. Catalyzes the oxidation of either pyridoxine 5'-phosphate (PNP) or pyridoxamine 5'-phosphate (PMP) into pyridoxal 5'-phosphate (PLP). This is Pyridoxine/pyridoxamine 5'-phosphate oxidase from Bordetella avium (strain 197N).